The primary structure comprises 329 residues: Phenylalanine--tRNA ligase alpha subunit (329 aa).

Residue Glu-254 coordinates Mg(2+).

This sequence belongs to the class-II aminoacyl-tRNA synthetase family. Phe-tRNA synthetase alpha subunit type 1 subfamily. In terms of assembly, tetramer of two alpha and two beta subunits. The cofactor is Mg(2+).

Its subcellular location is the cytoplasm. The catalysed reaction is tRNA(Phe) + L-phenylalanine + ATP = L-phenylalanyl-tRNA(Phe) + AMP + diphosphate + H(+). This chain is Phenylalanine--tRNA ligase alpha subunit, found in Histophilus somni (strain 2336) (Haemophilus somnus).